The chain runs to 114 residues: Non-specific lipid-transfer protein 2 (114 aa).

Residues 1-23 (MEMVNKIACFVLLCMVVVAPHAE) form the signal peptide. 4 cysteine pairs are disulfide-bonded: cysteine 27/cysteine 73, cysteine 37/cysteine 50, cysteine 51/cysteine 96, and cysteine 71/cysteine 110.

Belongs to the plant LTP family.

Plant non-specific lipid-transfer proteins transfer phospholipids as well as galactolipids across membranes. May play a role in wax or cutin deposition in the cell walls of expanding epidermal cells and certain secretory tissues. The sequence is that of Non-specific lipid-transfer protein 2 from Solanum chilense (Tomato).